Here is a 1256-residue protein sequence, read N- to C-terminus: Splicing factor, arginine/serine-rich 19 (1256 aa).

Disordered stretches follow at residues 1 to 33, 158 to 343, 371 to 395, 408 to 1030, 1112 to 1152, and 1221 to 1256; these read MEEE…SPSA, GKTV…APRR, ALSL…PEEE, PRQP…TLPP, GSLP…DKYL, and FRKH…LPPL. Residues 7–27 show a composition bias toward basic and acidic residues; that stretch reads SRGKTEESGEDRGDGPPDRDP. Residues 192-206 are compositionally biased toward low complexity; sequence SSASSSPSPSPSSSS. The span at 207 to 222 shows a compositional bias: pro residues; it reads PSPPPPPPPPPPPALP. A compositionally biased stretch (basic and acidic residues) spans 227 to 236; it reads DIYDPFHPTD. Position 240 is a phosphoserine (Ser-240). Residues 255–265 show a composition bias toward polar residues; that stretch reads TGSNPSSSAGT. Residues 268 to 282 are compositionally biased toward acidic residues; it reads PEEEEEEEEEEEEEG. Thr-328 carries the phosphothreonine modification. Residues 382–393 are compositionally biased toward acidic residues; that stretch reads PEIEEGEIVQPE. A compositionally biased stretch (low complexity) spans 412–424; the sequence is PASVATLASVAAP. A phosphoserine mark is found at Ser-442 and Ser-447. The segment covering 478–489 has biased composition (basic residues); the sequence is KILTQRRERYRQ. A phosphoserine mark is found at Ser-491, Ser-493, Ser-510, Ser-518, and Ser-520. 2 stretches are compositionally biased toward basic residues: residues 538–553 and 560–577; these read TARR…RSRS and RGGH…RRRS. Phosphoserine is present on residues Ser-577 and Ser-579. Positions 592–611 are enriched in basic residues; it reads RERHRGKRREGGKKKKKRSR. Basic and acidic residues predominate over residues 612-623; that stretch reads SRAEKRSGDLEK. Thr-663 is subject to Phosphothreonine. A phosphoserine mark is found at Ser-676 and Ser-682. Tyr-689 carries the post-translational modification Phosphotyrosine. Residues Ser-691 and Ser-695 each carry the phosphoserine modification. Basic and acidic residues-rich tracts occupy residues 696-709 and 719-741; these read ADER…DRRR and SREK…DRSS. Composition is skewed to low complexity over residues 752 to 775 and 793 to 804; these read PGSG…SCSS and SSTTPAKDSSSS. Lys-812 is covalently cross-linked (Glycyl lysine isopeptide (Lys-Gly) (interchain with G-Cter in SUMO2)). Basic and acidic residues predominate over residues 813–831; sequence FSRDRESRSPFLKPDERAP. Ser-819 and Ser-821 each carry phosphoserine. Positions 843–875 are enriched in basic residues; sequence KPKKTKAKAKAGAKKAKGTKGKTKPSKTRKKVR. 4 positions are modified to phosphoserine: Ser-876, Ser-883, Ser-910, and Ser-912. The segment covering 922-935 has biased composition (pro residues); that stretch reads STPPPKVAPPPPAL. A phosphothreonine mark is found at Thr-923 and Thr-936. Over residues 938–947 the composition is skewed to polar residues; it reads DSQTVDSSCK. Ser-939 is subject to Phosphoserine. Thr-948 is modified (phosphothreonine). Residues 969–984 are compositionally biased toward acidic residues; that stretch reads EEEEEEEEEEEEEEEQ. Residues 985–1017 show a composition bias toward low complexity; the sequence is QPATTTATSTAAAAPSTAPSAGSTAGDSGAEDG. Residues 1131 to 1256 are necessary for interaction with the CTD domain of POLR2A; it reads PASDKREGSS…GGPGLPLPPL (126 aa). Basic and acidic residues predominate over residues 1133–1152; that stretch reads SDKREGSSSSEGRGDTDKYL. Positions 1244-1256 are enriched in pro residues; that stretch reads PDKGGPGLPLPPL.

The protein belongs to the splicing factor SR family. As to quaternary structure, interacts with POLR2A.

Its subcellular location is the nucleus. Functionally, may function in pre-mRNA splicing. This is Splicing factor, arginine/serine-rich 19 (Scaf1) from Mus musculus (Mouse).